We begin with the raw amino-acid sequence, 331 residues long: Pantothenate kinase (331 aa).

Glycine 109 to serine 116 contacts ATP.

It belongs to the prokaryotic pantothenate kinase family.

Its subcellular location is the cytoplasm. It catalyses the reaction (R)-pantothenate + ATP = (R)-4'-phosphopantothenate + ADP + H(+). It participates in cofactor biosynthesis; coenzyme A biosynthesis; CoA from (R)-pantothenate: step 1/5. The polypeptide is Pantothenate kinase (Sinorhizobium fredii (strain NBRC 101917 / NGR234)).